A 398-amino-acid chain; its full sequence is MDRYPDENGYFGEYGGRFVPETLMPALEELEDAFKEAREDPEFWEELEELWRKYAGRPTPLYYARNLSRKLGVKVYLKREDLVHGGAHKLNNTLGQALLADRMGKDRIIAETGAGQHGLATAMAGAALGKKVEIYMGAIDVERQKHNVFRMELMGAKVHPVKAGTQTLKDAINEALRDWITNLETTHYLLGSVVGPHPYPWIVREFQRVIGRETKEQITELEGGLPDAIVACTGGGSNSIGIFYDFLDDEEVALYAVEAGGKGLDTDEHSASLCAGEVGVLHGCRTKVLQDEHGQIRPTHSIAPGLDYPGVGPELAFLVDEGRVTADAVTDEEALRGFVMLNETEGILPALESAHAVYYVKKLVERGELDRGDVVVVNLSGRGDKDVRIAAEELGVEI.

K89 is modified (N6-(pyridoxal phosphate)lysine).

It belongs to the TrpB family. As to quaternary structure, tetramer of two alpha and two beta chains. The cofactor is pyridoxal 5'-phosphate.

The catalysed reaction is (1S,2R)-1-C-(indol-3-yl)glycerol 3-phosphate + L-serine = D-glyceraldehyde 3-phosphate + L-tryptophan + H2O. Its pathway is amino-acid biosynthesis; L-tryptophan biosynthesis; L-tryptophan from chorismate: step 5/5. In terms of biological role, the beta subunit is responsible for the synthesis of L-tryptophan from indole and L-serine. The sequence is that of Tryptophan synthase beta chain from Methanopyrus kandleri (strain AV19 / DSM 6324 / JCM 9639 / NBRC 100938).